A 72-amino-acid polypeptide reads, in one-letter code: Translation initiation factor IF-1 (72 aa).

One can recognise an S1-like domain in the interval 1-72 (MAKEGAIEVE…TRGRIVYRYK (72 aa)).

The protein belongs to the IF-1 family. As to quaternary structure, component of the 30S ribosomal translation pre-initiation complex which assembles on the 30S ribosome in the order IF-2 and IF-3, IF-1 and N-formylmethionyl-tRNA(fMet); mRNA recruitment can occur at any time during PIC assembly.

The protein localises to the cytoplasm. Its function is as follows. One of the essential components for the initiation of protein synthesis. Stabilizes the binding of IF-2 and IF-3 on the 30S subunit to which N-formylmethionyl-tRNA(fMet) subsequently binds. Helps modulate mRNA selection, yielding the 30S pre-initiation complex (PIC). Upon addition of the 50S ribosomal subunit IF-1, IF-2 and IF-3 are released leaving the mature 70S translation initiation complex. The chain is Translation initiation factor IF-1 from Corynebacterium glutamicum (strain R).